Reading from the N-terminus, the 151-residue chain is 3-dehydroquinate dehydratase 1 (151 aa).

The active-site Proton acceptor is tyrosine 23. Substrate-binding residues include asparagine 75, histidine 81, and aspartate 88. Histidine 101 acts as the Proton donor in catalysis. Substrate is bound by residues 102–103 (LS) and arginine 112.

It belongs to the type-II 3-dehydroquinase family. Homododecamer.

It catalyses the reaction 3-dehydroquinate = 3-dehydroshikimate + H2O. It participates in metabolic intermediate biosynthesis; chorismate biosynthesis; chorismate from D-erythrose 4-phosphate and phosphoenolpyruvate: step 3/7. Its function is as follows. Catalyzes a trans-dehydration via an enolate intermediate. This chain is 3-dehydroquinate dehydratase 1 (aroQ1), found in Pseudomonas putida (strain ATCC 47054 / DSM 6125 / CFBP 8728 / NCIMB 11950 / KT2440).